The following is a 200-amino-acid chain: Probable GTP-binding protein EngB (200 aa).

Residues Ser26–Lys200 form the EngB-type G domain. GTP-binding positions include Gly34 to Ser41, Gly61 to Gln65, Asp80 to Gly83, Thr147 to Asp150, and Val176 to Ala179. Mg(2+) contacts are provided by Ser41 and Thr63.

It belongs to the TRAFAC class TrmE-Era-EngA-EngB-Septin-like GTPase superfamily. EngB GTPase family. The cofactor is Mg(2+).

In terms of biological role, necessary for normal cell division and for the maintenance of normal septation. In Ehrlichia canis (strain Jake), this protein is Probable GTP-binding protein EngB.